Consider the following 548-residue polypeptide: ATP synthase subunit alpha, mitochondrial (548 aa).

Residue 209 to 216 (GDRQTGKT) participates in ATP binding.

It belongs to the ATPase alpha/beta chains family. In terms of assembly, F-type ATPases have 2 components, CF(1) - the catalytic core - and CF(0) - the membrane proton channel. CF(1) has five subunits: alpha(3), beta(3), gamma(1), delta(1), epsilon(1). CF(0) has three main subunits: a, b and c.

It is found in the mitochondrion. The protein resides in the mitochondrion inner membrane. Its function is as follows. Mitochondrial membrane ATP synthase (F(1)F(0) ATP synthase or Complex V) produces ATP from ADP in the presence of a proton gradient across the membrane which is generated by electron transport complexes of the respiratory chain. F-type ATPases consist of two structural domains, F(1) - containing the extramembraneous catalytic core, and F(0) - containing the membrane proton channel, linked together by a central stalk and a peripheral stalk. During catalysis, ATP synthesis in the catalytic domain of F(1) is coupled via a rotary mechanism of the central stalk subunits to proton translocation. Subunits alpha and beta form the catalytic core in F(1). Rotation of the central stalk against the surrounding alpha(3)beta(3) subunits leads to hydrolysis of ATP in three separate catalytic sites on the beta subunits. Subunit alpha does not bear the catalytic high-affinity ATP-binding sites. The polypeptide is ATP synthase subunit alpha, mitochondrial (ATP1) (Kluyveromyces lactis (strain ATCC 8585 / CBS 2359 / DSM 70799 / NBRC 1267 / NRRL Y-1140 / WM37) (Yeast)).